Reading from the N-terminus, the 536-residue chain is Chaperonin GroEL (536 aa).

Residues Thr29 to Pro32, Asp86 to Thr90, Gly413, Asp476 to Ala478, and Asp492 each bind ATP.

This sequence belongs to the chaperonin (HSP60) family. In terms of assembly, forms a cylinder of 14 subunits composed of two heptameric rings stacked back-to-back. Interacts with the co-chaperonin GroES.

The protein localises to the cytoplasm. It catalyses the reaction ATP + H2O + a folded polypeptide = ADP + phosphate + an unfolded polypeptide.. Its function is as follows. Together with its co-chaperonin GroES, plays an essential role in assisting protein folding. The GroEL-GroES system forms a nano-cage that allows encapsulation of the non-native substrate proteins and provides a physical environment optimized to promote and accelerate protein folding. The chain is Chaperonin GroEL from Methanococcus vannielii (strain ATCC 35089 / DSM 1224 / JCM 13029 / OCM 148 / SB).